A 2036-amino-acid polypeptide reads, in one-letter code: Bikaverin polyketide synthase bik1 (2036 aa).

An N-terminal acylcarrier protein transacylase domain (SAT) region spans residues tyrosine 8–histidine 242. The Ketosynthase family 3 (KS3) domain maps to glutamate 370 to aspartate 801. Catalysis depends on for beta-ketoacyl synthase activity residues cysteine 541, histidine 676, and histidine 718. Residues phenylalanine 908–histidine 1209 form an acyl/malonyl transferases region. Serine 997 serves as the catalytic For acyl/malonyl transferase activity. The N-terminal hotdog fold stretch occupies residues histidine 1293–serine 1425. Residues histidine 1293–glutamate 1600 form the PKS/mFAS DH domain. Positions valine 1295 to leucine 1599 are product template (PT) domain. The active-site Proton acceptor; for dehydratase activity is the histidine 1325. The interval serine 1452 to glutamate 1600 is C-terminal hotdog fold. The Proton donor; for dehydratase activity role is filled by aspartate 1511. Positions valine 1628–serine 1654 are disordered. Positions serine 1638–serine 1654 are enriched in low complexity. In terms of domain architecture, Carrier spans glycine 1653–aspartate 1730. Serine 1690 carries the post-translational modification O-(pantetheine 4'-phosphoryl)serine. Residues phenylalanine 1733–aspartate 1758 form a disordered region. Residues serine 1734–serine 1753 show a composition bias toward low complexity. Serine 1857 serves as the catalytic For thioesterase activity.

Its pathway is secondary metabolite biosynthesis. Its function is as follows. Polyketide synthase; part of the gene cluster that mediates the biosynthesis of bikaverin, a red pigment also considered as a mycotoxin. The first stage is catalyzed by the polyketide synthase bik1, which catalyzes the formation of the intermediate SMA76a also knowm as pre-bikaverin. FAD-dependent monooxygenase bik2 might then be responsible for the oxidation of pre-bikaverin to oxo-pre-bikaverin which is in turn methylated by the O-methyltransferase bik3 to me-oxo-pre-bikaverin. A further cycle of oxydation and methylation by bik2 and bik3 leads to the final product of bikaverin, via a nor-bikaverin intermediate. The chain is Bikaverin polyketide synthase bik1 from Gibberella fujikuroi (strain CBS 195.34 / IMI 58289 / NRRL A-6831) (Bakanae and foot rot disease fungus).